The following is a 345-amino-acid chain: IGF-like family receptor 1 (345 aa).

An N-terminal signal peptide occupies residues 1-20 (MGPSWLLWTVAVAVLLLTRA). Residues 21–163 (ASMEASSFCG…SSRPGFVSAS (143 aa)) are Extracellular-facing. N-linked (GlcNAc...) asparagine glycosylation is present at N87. Residues 106 to 149 (VESPGRTHKQCRKKPVPPKDVCPLKPEDAGASSSPGRWSLGQTT) form a disordered region. Basic residues predominate over residues 111–121 (RTHKQCRKKPV). Positions 136 to 149 (ASSSPGRWSLGQTT) are enriched in polar residues. Residues 164-184 (VLPLAVLPLLLVLLLILAVVL) form a helical membrane-spanning segment. Topologically, residues 185–345 (LSLFKRKVRS…DALQVLSKLG (161 aa)) are cytoplasmic.

In terms of tissue distribution, ubiquitously expressed with higher expression in lymph node. Highly expressed in T-cells and monocytes.

It is found in the cell membrane. Its function is as follows. Probable cell membrane receptor for the IGF-like family protein IGFL. This is IGF-like family receptor 1 (Igflr1) from Mus musculus (Mouse).